The following is a 251-amino-acid chain: Pyrroloquinoline-quinone synthase (251 aa).

Belongs to the PqqC family.

It catalyses the reaction 6-(2-amino-2-carboxyethyl)-7,8-dioxo-1,2,3,4,7,8-hexahydroquinoline-2,4-dicarboxylate + 3 O2 = pyrroloquinoline quinone + 2 H2O2 + 2 H2O + H(+). The protein operates within cofactor biosynthesis; pyrroloquinoline quinone biosynthesis. Its function is as follows. Ring cyclization and eight-electron oxidation of 3a-(2-amino-2-carboxyethyl)-4,5-dioxo-4,5,6,7,8,9-hexahydroquinoline-7,9-dicarboxylic-acid to PQQ. The chain is Pyrroloquinoline-quinone synthase from Pseudomonas entomophila (strain L48).